The following is a 275-amino-acid chain: Putative phosphoenolpyruvate synthase regulatory protein (275 aa).

Position 153 to 160 (153 to 160 (GVSRTGKT)) interacts with ADP.

Belongs to the pyruvate, phosphate/water dikinase regulatory protein family. PSRP subfamily.

The enzyme catalyses [pyruvate, water dikinase] + ADP = [pyruvate, water dikinase]-phosphate + AMP + H(+). The catalysed reaction is [pyruvate, water dikinase]-phosphate + phosphate + H(+) = [pyruvate, water dikinase] + diphosphate. Functionally, bifunctional serine/threonine kinase and phosphorylase involved in the regulation of the phosphoenolpyruvate synthase (PEPS) by catalyzing its phosphorylation/dephosphorylation. The polypeptide is Putative phosphoenolpyruvate synthase regulatory protein (Nitrosomonas europaea (strain ATCC 19718 / CIP 103999 / KCTC 2705 / NBRC 14298)).